Reading from the N-terminus, the 600-residue chain is Glutamine--fructose-6-phosphate aminotransferase [isomerizing] (600 aa).

Cys-2 (nucleophile; for GATase activity) is an active-site residue. The 216-residue stretch at 2-217 folds into the Glutamine amidotransferase type-2 domain; it reads CGIVGFIGEQ…DKEIVIVTKE (216 aa). 2 SIS domains span residues 283-422 and 452-590; these read IRNA…AKGE and LAKQ…VDKP. The active-site For Fru-6P isomerization activity is Lys-595.

In terms of assembly, homodimer.

The protein localises to the cytoplasm. The catalysed reaction is D-fructose 6-phosphate + L-glutamine = D-glucosamine 6-phosphate + L-glutamate. Functionally, catalyzes the first step in hexosamine metabolism, converting fructose-6P into glucosamine-6P using glutamine as a nitrogen source. The protein is Glutamine--fructose-6-phosphate aminotransferase [isomerizing] of Bacillus cereus (strain ATCC 10987 / NRS 248).